Reading from the N-terminus, the 1893-residue chain is CDK5 regulatory subunit-associated protein 2 (1893 aa).

The tract at residues 51 to 94 is CM1 motif; interacts with the gTuRC; the sequence is TVSPTRARNMKDFENQITELKKENFNLKLRIYFLEERMQQEFHG. The interval 58-196 is interaction with NCKAP5L; that stretch reads RNMKDFENQI…TEKALRLRLE (139 aa). Ser547 is subject to Phosphoserine. The tract at residues 926–1208 is interaction with MAPRE1; that stretch reads PGITNREAKK…LENLKQQLEE (283 aa). Thr1001 carries the phosphothreonine modification. Disordered stretches follow at residues 1015 to 1071 and 1084 to 1105; these read AAYQ…NPED and SKSQPSAKVSVMGTDQSESINT. The span at 1034-1048 shows a compositional bias: basic and acidic residues; the sequence is WRDKEMDSDQQRSYE. Phosphoserine is present on Ser1238. Positions 1347–1381 are disordered; the sequence is LPESPEPSASHALSDYETSEKSFFSRDQKQDNETE. The segment covering 1364–1381 has biased composition (basic and acidic residues); that stretch reads TSEKSFFSRDQKQDNETE. Ser1490 is subject to Phosphoserine. Basic and acidic residues-rich tracts occupy residues 1500 to 1519 and 1651 to 1661; these read SVKEENERLQKEGSEKERHN and PDKHDGDKYPM. 3 disordered regions span residues 1500–1521, 1646–1706, and 1754–1774; these read SVKEENERLQKEGSEKERHNQQ, EVPL…ATST, and QTQEAPSSTSQELGTKGPHPA. Phosphoserine occurs at positions 1663 and 1666. Composition is skewed to polar residues over residues 1663–1706 and 1754–1766; these read SDNS…ATST and QTQEAPSSTSQEL. The tract at residues 1726 to 1768 is interaction with CDK5R1; the sequence is HVLGLIEDYEALLKQISQGQRLLAEMDIQTQEAPSSTSQELGT. The interaction with PCNT and AKAP9 stretch occupies residues 1726–1893; that stretch reads HVLGLIEDYE…GTCSPSRPGS (168 aa). Residues 1861–1870 are required for centrosomal attachment, Golgi localization and CALM1 interaction; that stretch reads VVTHKILRKA. At Ser1893 the chain carries Phosphoserine.

Homodimer. Interacts with CDK5R1 (p35 form). CDK5RAP1, CDK5RAP2 and CDK5RAP3 show competitive binding to CDK5R1. May form a complex with CDK5R1 and CDK5. Interacts with pericentrin/PCNT; the interaction is leading to centrosomal and Golgi localization of CDK5RAP2 and PCNT. Interacts with AKAP9; the interaction targets CDK5RAP2 and AKAP9 to Golgi apparatus. Interacts with MAPRE1; the interaction is direct and targets CDK5RAP2 and EB1/MAPRE1 to microtubule plus ends. Interacts with TUBG1; the interaction is leading to the centrosomal localization of CDK5RAP2 and TUBG1. Interacts with TUBGCP3. Interacts with CALM1. Interacts with CDC20. Interacts with CEP68; degradation of CEP68 in early mitosis leads to removal of CDK5RAP2 from the centrosome which promotes centriole disengagement and subsequent centriole separation. Interacts with NCKAP5L. Forms a pericentrosomal complex with AKAP9, MAPRE1 and PDE4DIP isoform 13/MMG8/SMYLE; within this complex, MAPRE1 binding to CDK5RAP2 may be mediated by PDE4DIP. Interacts with LGALS3BP; this interaction may connect the pericentrosomal complex to the gamma-tubulin ring complex (gTuRC) to promote microtubule assembly and acetylation. Interacts with CCDC66. Associates (via CM1 motif) with TUBGCP2 of the gTuRC; the interaction plays a role in gTuRC activation. Post-translationally, phosphorylated in vitro by CDK5. Widely expressed. Expressed in heart, brain, placenta, lung, liver, skeletal muscle, kidney and pancreas.

Its subcellular location is the cytoplasm. The protein resides in the cytoskeleton. It is found in the microtubule organizing center. It localises to the centrosome. The protein localises to the golgi apparatus. In terms of biological role, potential regulator of CDK5 activity via its interaction with CDK5R1. Negative regulator of centriole disengagement (licensing) which maintains centriole engagement and cohesion. Involved in regulation of mitotic spindle orientation. Plays a role in the spindle checkpoint activation by acting as a transcriptional regulator of both BUBR1 and MAD2 promoter. Together with EB1/MAPRE1, may promote microtubule polymerization, bundle formation, growth and dynamics at the plus ends. Regulates centrosomal maturation by recruitment of the gamma-tubulin ring complex (gTuRC) onto centrosomes. In complex with PDE4DIP isoform 13/MMG8/SMYLE, MAPRE1 and AKAP9, contributes to microtubules nucleation and extension from the centrosome to the cell periphery. Required for the recruitment of AKAP9 to centrosomes. Plays a role in neurogenesis. The protein is CDK5 regulatory subunit-associated protein 2 (CDK5RAP2) of Homo sapiens (Human).